The sequence spans 176 residues: MFEKDKWMTIGEIVAPQGLRGDLRIKPSSDFPERFTKPGKRWIQKTDELPTEIKLTKGKLIPGKSIYVLSIEGVSTRSSAEEIIGWKLVIPIDSRPMLSKDEYHYHDLIGLEARRGPSKALIGYVTDLIKGGNDLLEIELVEGKKVLVPFVKEIVPEIEIKEKWLLINPPPGLLEL.

The PRC barrel domain maps to 100 to 173 (KDEYHYHDLI…WLLINPPPGL (74 aa)).

The protein belongs to the RimM family. As to quaternary structure, binds ribosomal protein uS19.

It localises to the cytoplasm. Functionally, an accessory protein needed during the final step in the assembly of 30S ribosomal subunit, possibly for assembly of the head region. Essential for efficient processing of 16S rRNA. May be needed both before and after RbfA during the maturation of 16S rRNA. It has affinity for free ribosomal 30S subunits but not for 70S ribosomes. The chain is Ribosome maturation factor RimM from Prochlorococcus marinus (strain NATL2A).